Here is a 317-residue protein sequence, read N- to C-terminus: Acetyl-coenzyme A carboxylase carboxyl transferase subunit alpha (317 aa).

The region spanning 39-293 is the CoA carboxyltransferase C-terminal domain; the sequence is KLEGKAQEAL…GNAIAEAMGS (255 aa).

This sequence belongs to the AccA family. As to quaternary structure, acetyl-CoA carboxylase is a heterohexamer composed of biotin carboxyl carrier protein (AccB), biotin carboxylase (AccC) and two subunits each of ACCase subunit alpha (AccA) and ACCase subunit beta (AccD).

It is found in the cytoplasm. It catalyses the reaction N(6)-carboxybiotinyl-L-lysyl-[protein] + acetyl-CoA = N(6)-biotinyl-L-lysyl-[protein] + malonyl-CoA. It functions in the pathway lipid metabolism; malonyl-CoA biosynthesis; malonyl-CoA from acetyl-CoA: step 1/1. Functionally, component of the acetyl coenzyme A carboxylase (ACC) complex. First, biotin carboxylase catalyzes the carboxylation of biotin on its carrier protein (BCCP) and then the CO(2) group is transferred by the carboxyltransferase to acetyl-CoA to form malonyl-CoA. The protein is Acetyl-coenzyme A carboxylase carboxyl transferase subunit alpha of Azorhizobium caulinodans (strain ATCC 43989 / DSM 5975 / JCM 20966 / LMG 6465 / NBRC 14845 / NCIMB 13405 / ORS 571).